Consider the following 196-residue polypeptide: Leucyl/phenylalanyl-tRNA--protein transferase (196 aa).

It belongs to the L/F-transferase family.

It is found in the cytoplasm. It carries out the reaction N-terminal L-lysyl-[protein] + L-leucyl-tRNA(Leu) = N-terminal L-leucyl-L-lysyl-[protein] + tRNA(Leu) + H(+). It catalyses the reaction N-terminal L-arginyl-[protein] + L-leucyl-tRNA(Leu) = N-terminal L-leucyl-L-arginyl-[protein] + tRNA(Leu) + H(+). The catalysed reaction is L-phenylalanyl-tRNA(Phe) + an N-terminal L-alpha-aminoacyl-[protein] = an N-terminal L-phenylalanyl-L-alpha-aminoacyl-[protein] + tRNA(Phe). Its function is as follows. Functions in the N-end rule pathway of protein degradation where it conjugates Leu, Phe and, less efficiently, Met from aminoacyl-tRNAs to the N-termini of proteins containing an N-terminal arginine or lysine. This is Leucyl/phenylalanyl-tRNA--protein transferase from Thermosynechococcus vestitus (strain NIES-2133 / IAM M-273 / BP-1).